Reading from the N-terminus, the 331-residue chain is Biotin synthase (331 aa).

Positions 51-278 constitute a Radical SAM core domain; the sequence is QTIQLSTLMS…KSYVRLSAGR (228 aa). The [4Fe-4S] cluster site is built by Cys66, Cys70, and Cys73. Cys110, Cys141, Cys201, and Arg273 together coordinate [2Fe-2S] cluster.

This sequence belongs to the radical SAM superfamily. Biotin synthase family. In terms of assembly, homodimer. It depends on [4Fe-4S] cluster as a cofactor. [2Fe-2S] cluster is required as a cofactor.

The catalysed reaction is (4R,5S)-dethiobiotin + (sulfur carrier)-SH + 2 reduced [2Fe-2S]-[ferredoxin] + 2 S-adenosyl-L-methionine = (sulfur carrier)-H + biotin + 2 5'-deoxyadenosine + 2 L-methionine + 2 oxidized [2Fe-2S]-[ferredoxin]. It participates in cofactor biosynthesis; biotin biosynthesis; biotin from 7,8-diaminononanoate: step 2/2. In terms of biological role, catalyzes the conversion of dethiobiotin (DTB) to biotin by the insertion of a sulfur atom into dethiobiotin via a radical-based mechanism. This chain is Biotin synthase, found in Histophilus somni (strain 129Pt) (Haemophilus somnus).